The following is a 106-amino-acid chain: Putative toxin Rv3098A/RVBD_3098A (106 aa).

The protein belongs to the PemK/MazF family. As to quaternary structure, forms a complex with cognate antitoxin Rv3098B/RVBD_3098B.

In terms of biological role, putative toxic component of a possible type II toxin-antitoxin (TA) system. Its toxic effect may be neutralized by cognate antitoxin Rv3098B/RVBD_3098B. This chain is Putative toxin Rv3098A/RVBD_3098A, found in Mycobacterium tuberculosis (strain ATCC 25618 / H37Rv).